Here is a 214-residue protein sequence, read N- to C-terminus: ATP phosphoribosyltransferase (214 aa).

It belongs to the ATP phosphoribosyltransferase family. Short subfamily. As to quaternary structure, heteromultimer composed of HisG and HisZ subunits.

The protein localises to the cytoplasm. It catalyses the reaction 1-(5-phospho-beta-D-ribosyl)-ATP + diphosphate = 5-phospho-alpha-D-ribose 1-diphosphate + ATP. Its pathway is amino-acid biosynthesis; L-histidine biosynthesis; L-histidine from 5-phospho-alpha-D-ribose 1-diphosphate: step 1/9. In terms of biological role, catalyzes the condensation of ATP and 5-phosphoribose 1-diphosphate to form N'-(5'-phosphoribosyl)-ATP (PR-ATP). Has a crucial role in the pathway because the rate of histidine biosynthesis seems to be controlled primarily by regulation of HisG enzymatic activity. The chain is ATP phosphoribosyltransferase from Streptococcus sanguinis (strain SK36).